Reading from the N-terminus, the 284-residue chain is Pantothenate synthetase (284 aa).

30–37 (MGNLHDGH) is a binding site for ATP. The active-site Proton donor is His-37. Gln-61 serves as a coordination point for (R)-pantoate. Residue Gln-61 coordinates beta-alanine. Residue 149–152 (GEKD) coordinates ATP. Gln-155 lines the (R)-pantoate pocket. Residues Ile-178 and 186–189 (LSSR) each bind ATP.

The protein belongs to the pantothenate synthetase family. As to quaternary structure, homodimer.

Its subcellular location is the cytoplasm. The enzyme catalyses (R)-pantoate + beta-alanine + ATP = (R)-pantothenate + AMP + diphosphate + H(+). The protein operates within cofactor biosynthesis; (R)-pantothenate biosynthesis; (R)-pantothenate from (R)-pantoate and beta-alanine: step 1/1. Functionally, catalyzes the condensation of pantoate with beta-alanine in an ATP-dependent reaction via a pantoyl-adenylate intermediate. This is Pantothenate synthetase from Salmonella heidelberg (strain SL476).